The sequence spans 102 residues: Integration host factor subunit alpha (102 aa).

The protein belongs to the bacterial histone-like protein family. Heterodimer of an alpha and a beta chain.

Functionally, this protein is one of the two subunits of integration host factor, a specific DNA-binding protein that functions in genetic recombination as well as in transcriptional and translational control. The protein is Integration host factor subunit alpha of Paracoccus denitrificans (strain Pd 1222).